Consider the following 879-residue polypeptide: Prostaglandin F2 receptor negative regulator (879 aa).

The N-terminal stretch at 1–21 (MGRPAPRPLLLALLSLAVCRG) is a signal peptide. Ig-like C2-type domains lie at 22–129 (RVVR…ATVQ) and 149–268 (PSSR…KAVE). Over 22–832 (RVVRVPAGTL…MDVLNAFKYP (811 aa)) the chain is Extracellular. Disulfide bonds link Cys-43-Cys-119 and Cys-169-Cys-247. A glycan (N-linked (GlcNAc...) asparagine) is linked at Asn-44. A Cell attachment site motif is present at residues 89–91 (RGD). Thr-271 carries the phosphothreonine modification. 4 Ig-like C2-type domains span residues 276-389 (PTAL…WHKV), 406-527 (PEYQ…RNSS), 544-662 (ASED…AWSP), and 688-813 (PIFN…AEIH). A disulfide bridge links Cys-299 with Cys-373. N-linked (GlcNAc...) asparagine glycosylation is found at Asn-300, Asn-383, and Asn-413. The short motif at 424-427 (PTEL) is the Endoplasmic reticulum retention signal element. A disulfide bridge connects residues Cys-429 and Cys-515. N-linked (GlcNAc...) asparagine glycans are attached at residues Asn-525, Asn-600, Asn-618, and Asn-691. Cys-571 and Cys-655 are joined by a disulfide. The Cell attachment site signature appears at 703 to 705 (RGD). Cys-711 and Cys-793 are joined by a disulfide. The helical transmembrane segment at 833-853 (LLIGVGLSTVIGLLSCLIGYC) threads the bilayer. Over 854–879 (SSHWCCKKEVRETRRERRRLMSMEMD) the chain is Cytoplasmic.

Interacts with CD9 and CD81. Part of a complex composed of CD9, CD81 and IGSF8. Also seems to interact with CD63, CD82 and CD151. As to expression, reproductive tissues, lung and heart.

Its subcellular location is the endoplasmic reticulum membrane. The protein resides in the golgi apparatus. It localises to the trans-Golgi network membrane. In terms of biological role, inhibits the binding of prostaglandin F2-alpha (PGF2-alpha) to its specific FP receptor, by decreasing the receptor number rather than the affinity constant. Functional coupling with the prostaglandin F2-alpha receptor seems to occur. In myoblasts, associates with tetraspanins CD9 and CD81 to prevent myotube fusion during muscle regeneration. The chain is Prostaglandin F2 receptor negative regulator (Ptgfrn) from Rattus norvegicus (Rat).